Here is a 280-residue protein sequence, read N- to C-terminus: Phosphatidylserine decarboxylase proenzyme (280 aa).

Active-site charge relay system; for autoendoproteolytic cleavage activity residues include aspartate 88, histidine 144, and serine 247. The active-site Schiff-base intermediate with substrate; via pyruvic acid; for decarboxylase activity is the serine 247. The residue at position 247 (serine 247) is a Pyruvic acid (Ser); by autocatalysis.

This sequence belongs to the phosphatidylserine decarboxylase family. PSD-B subfamily. Prokaryotic type I sub-subfamily. In terms of assembly, heterodimer of a large membrane-associated beta subunit and a small pyruvoyl-containing alpha subunit. Pyruvate serves as cofactor. Is synthesized initially as an inactive proenzyme. Formation of the active enzyme involves a self-maturation process in which the active site pyruvoyl group is generated from an internal serine residue via an autocatalytic post-translational modification. Two non-identical subunits are generated from the proenzyme in this reaction, and the pyruvate is formed at the N-terminus of the alpha chain, which is derived from the carboxyl end of the proenzyme. The autoendoproteolytic cleavage occurs by a canonical serine protease mechanism, in which the side chain hydroxyl group of the serine supplies its oxygen atom to form the C-terminus of the beta chain, while the remainder of the serine residue undergoes an oxidative deamination to produce ammonia and the pyruvoyl prosthetic group on the alpha chain. During this reaction, the Ser that is part of the protease active site of the proenzyme becomes the pyruvoyl prosthetic group, which constitutes an essential element of the active site of the mature decarboxylase.

It is found in the cell membrane. The catalysed reaction is a 1,2-diacyl-sn-glycero-3-phospho-L-serine + H(+) = a 1,2-diacyl-sn-glycero-3-phosphoethanolamine + CO2. Its pathway is phospholipid metabolism; phosphatidylethanolamine biosynthesis; phosphatidylethanolamine from CDP-diacylglycerol: step 2/2. Its function is as follows. Catalyzes the formation of phosphatidylethanolamine (PtdEtn) from phosphatidylserine (PtdSer). This is Phosphatidylserine decarboxylase proenzyme from Xanthomonas axonopodis pv. citri (strain 306).